The following is a 200-amino-acid chain: MVKDIKVMVVGDMSVGKTCLLISYTTNSFPGEYVPTVFDNYNANAIVNNTPINLGLWDTAGSEEYNSFRPLSYPGTDVFIICFSLISQTSFENVIKKWHPEIIQNMEQVPPIILVGTKLDLRGKGKSEEKEVTPEMGEQMRAAIGAYKYSECSALTQDGLTTVFEEAGRVVLFPPSKEELAKSKKDSKKGDKDSKDCIIQ.

Residue 11 to 18 (GDMSVGKT) participates in GTP binding. Positions 33 to 41 (YVPTVFDNY) match the Effector region motif. Residues 58-62 (DTAGS) and 117-120 (TKLD) each bind GTP. Positions 178–200 (EELAKSKKDSKKGDKDSKDCIIQ) are disordered. Residue cysteine 197 is modified to Cysteine methyl ester. The S-geranylgeranyl cysteine moiety is linked to residue cysteine 197. The propeptide at 198 to 200 (IIQ) is removed in mature form.

This sequence belongs to the small GTPase superfamily. Rho family.

Its subcellular location is the cell membrane. The sequence is that of Rho-related protein racH (racH) from Dictyostelium discoideum (Social amoeba).